Consider the following 496-residue polypeptide: Sodium/sialic acid symporter SiaT (496 aa).

The Periplasmic portion of the chain corresponds to 1 to 7 (MQLHDFG). Residues 8 to 29 (FINYAVLFGYLAAMLLVGVYFS) form a helical membrane-spanning segment. Residues 30-46 (KRQKTADDYFRGGGRVP) lie on the Cytoplasmic side of the membrane. A helical membrane pass occupies residues 47–59 (GWAAGVSVFATTL). Ala56 contributes to the Na(+) binding site. Thr58 contributes to the N-acetyl-alpha-neuraminate binding site. Na(+) is bound at residue Leu59. The N-acetyl-alpha-neuraminate site is built by Ser60, Thr63, and Gln82. Over 60–76 (SSITFMSIPAKAYTSDW) the chain is Periplasmic. Residues 77 to 92 (TFIIGQYLAIAILPLV) traverse the membrane as a helical segment. Residues 93–116 (FYFYIPFFRKLKITSAYEYLEARF) are Cytoplasmic-facing. A helical transmembrane segment spans residues 117–144 (DVRSRLFASLSFMLFHIGRVAIITYLTV). Arg135 is a binding site for N-acetyl-alpha-neuraminate. At 145–154 (LALRPFMGID) the chain is on the periplasmic side. The chain crosses the membrane as a helical span at residues 155-172 (PVVLIVLISLLCIIYTWM). Residues 173–174 (GG) are Cytoplasmic-facing. Residues 175–199 (IEGVIWTDVIQGLLLSGGAVLIFIM) form a helical membrane-spanning segment. Asp182 provides a ligand contact to Na(+). Over 200 to 235 (ICFKVDGGISEIFTTTAQADKFFPTTQWRWSWTDST) the chain is Periplasmic. Residues 236 to 252 (IPVLMIGFLFANIQQFT) traverse the membrane as a helical segment. Topologically, residues 253–272 (ASQDVVQRYIVTDSIKETKR) are cytoplasmic. A helical transmembrane segment spans residues 273 to 292 (TLITNAKLVAIIPIFFFAIG). Over 293 to 325 (SALFVYYQQNPSLLPAGFNTGGILPLFIVTEMP) the chain is Periplasmic. A helical membrane pass occupies residues 326–356 (IGIAGLIIAAIFAAAQSSISSSLNSISSCFN). Ala339, Ser342, Ser343, Ser345, and Ser346 together coordinate Na(+). Residues 357–374 (SDIYTRLSKSSPSPEQKM) lie on the Cytoplasmic side of the membrane. The helical transmembrane segment at 375–396 (KVAKLVIIVAGIFSSLAAIWLV) threads the bilayer. Topologically, residues 397–403 (LSDEAEI) are periplasmic. The chain crosses the membrane as a helical span at residues 404 to 427 (WDAFNSLIGLMGGPMTGLFMLGIF). Over 428–432 (VKRAN) the chain is Cytoplasmic. Residues 433–453 (AGSAVVGIIVSIIAVLAARYG) form a helical membrane-spanning segment. Topologically, residues 454–457 (SDLN) are periplasmic. Residues 458–479 (FFFYGVIGSMSVVIAGTITAPL) traverse the membrane as a helical segment. Topologically, residues 480-496 (FAPAKQLSLDDSETSEN) are cytoplasmic.

Belongs to the sodium:solute symporter (SSF) (TC 2.A.21) family.

The protein resides in the cell inner membrane. It carries out the reaction N-acetyl-alpha-neuraminate(out) + 2 Na(+)(out) = N-acetyl-alpha-neuraminate(in) + 2 Na(+)(in). Its activity is regulated as follows. Both Na(+) sites regulate Neu5Ac transport. The binding energy of the second Na(+) ion may be used to allosterically stabilize the substrate without directly coordinating it. In the absence of external Na(+), the rate is reduced by 78%. Its function is as follows. Symporter that uses the Na(+) gradient as the driving force for the uptake of the sialic acid N-acetylneuraminic acid (Neu5Ac). It allows the use of host-derived Neu5Ac as an energy source by P.mirabilis. Also binds N-glycolylneuraminic acid (Neu5Gc) and ketodeoxynonulosonic acid (KDN). Shows the highest affinity for Neu5Ac and Neu5Gc, which commonly occupy the terminal non-reducing position of mammalian cell surface glycoconjugates. In Proteus mirabilis (strain HI4320), this protein is Sodium/sialic acid symporter SiaT.